The primary structure comprises 176 residues: Putative phosphohydrolase YueE (176 aa).

Positions 23 to 139 constitute an HD domain; the sequence is GVAHAIACAY…VKKADELDEE (117 aa).

This is Putative phosphohydrolase YueE (yueE) from Bacillus subtilis (strain 168).